The primary structure comprises 389 residues: SH3 and F-BAR domain-containing protein DDB_G0274695 (389 aa).

Residues 3-258 enclose the F-BAR domain; the sequence is EQFKDNFWGP…VITQIDKLED (256 aa). The stretch at 119–192 forms a coiled coil; the sequence is KLNKERKDME…QDYRDSVNKL (74 aa). A compositionally biased stretch (low complexity) spans 300 to 328; the sequence is LTSSVSSNSLTSSYNSATTTPTPAPRSTP. The tract at residues 300–329 is disordered; it reads LTSSVSSNSLTSSYNSATTTPTPAPRSTPI. The SH3 domain maps to 332-389; that stretch reads SKKKQAKALYDYVGSDATELDFFAGDIITILDEDESGWFRGELGDRIGLYPSNYCEPI.

The chain is SH3 and F-BAR domain-containing protein DDB_G0274695 from Dictyostelium discoideum (Social amoeba).